Reading from the N-terminus, the 298-residue chain is Protein BZR1 homolog 1 (298 aa).

Disordered stretches follow at residues 1–25 (MTSG…RRER), 71–129 (GTTY…SPSR), 153–175 (VSSS…PKIR), and 190–217 (AVSA…ESDV). Residues 10–91 (RTPTWKEREN…PSSAGGASVG (82 aa)) form a required for DNA-binding region. Positions 96 to 128 (SSTQLLSAPSSSFPSPVPSYHASPASSSFPSPS) are enriched in low complexity. Ser156 is subject to Phosphoserine. Residues 204 to 224 (EHPDTIPECDESDVSTVDSGR) form a PEST-like region.

It belongs to the BZR/LAT61 family. As to quaternary structure, interacts with GF14C. Interacts with PUB24. Interacts with SMOS1. In terms of processing, phosphorylated on serine and threonine residues by GSK2. Dephosphorylated during response to brassinosteroid. Ubiquitinated by PUB24. Ubiquitination leads to its subsequent degradation by the 26S proteasome, thus reducing sensitivity to brassinosteroid signaling.

Its subcellular location is the nucleus. The protein localises to the cytoplasm. In terms of biological role, positive brassinosteroid-signaling protein. Mediates downstream brassinosteroid-regulated growth response and feedback inhibition of brassinosteroid (BR) biosynthetic genes. May act as transcriptional repressor by binding the brassinosteroid-response element (BREE) (5'-CGTG(T/C)G-3') in the promoter of DLT (AC Q9LWU9), another positive regulator of BR signaling. Acts as a transcriptional repressor of LIC, a negative regulator of BR signaling, by binding to the BRRE element of its promoter. BZR1 and LIC play opposite roles in BR signaling and regulation of leaf bending. The chain is Protein BZR1 homolog 1 from Oryza sativa subsp. japonica (Rice).